Reading from the N-terminus, the 1055-residue chain is Kinesin-like protein KIN-7D, mitochondrial (1055 aa).

Low complexity predominate over residues 1–23; sequence MASSSSRTRSSRPPSPASSTSSS. Residues 1–36 are disordered; that stretch reads MASSSSRTRSSRPPSPASSTSSSHLSNRLIPRSNST. The transit peptide at 1 to 96 directs the protein to the mitochondrion; sequence MASSSSRTRS…PMDDTISSER (96 aa). One can recognise a Kinesin motor domain in the interval 98–415; the sequence is SISVTVRFRP…LKFASRAKSI (318 aa). 178–185 provides a ligand contact to ATP; sequence GVTSSGKT. Coiled coils occupy residues 419-503, 618-653, and 694-823; these read ASRN…ILVS, PENSQTQIQNLEREIHEKQRQMRGLEQLIIESGEAS, and LQEK…LAQT. Positions 826 to 856 are disordered; that stretch reads PMNGVNRKYNDGARSGRKGRISSSRSSGDEF. The stretch at 880 to 911 forms a coiled coil; the sequence is LESALAEKEFIEDEYRKKAEEAKRREEALEND. The segment at 926–963 is disordered; the sequence is NGALPEPNGTDPGRELEKSQSHAVLKERQVSSAPRQPE. Basic and acidic residues predominate over residues 937 to 954; sequence PGRELEKSQSHAVLKERQ. The RING-type zinc-finger motif lies at 1008–1043; the sequence is CKVCFESPTAAILLPCRHFCLCKSCSLACSECPICR.

It belongs to the TRAFAC class myosin-kinesin ATPase superfamily. Kinesin family. KIN-7 subfamily.

Its subcellular location is the mitochondrion. The polypeptide is Kinesin-like protein KIN-7D, mitochondrial (Arabidopsis thaliana (Mouse-ear cress)).